Here is a 435-residue protein sequence, read N- to C-terminus: Xylose isomerase (435 aa).

Residues histidine 100 and aspartate 103 contribute to the active site. Glutamate 231, glutamate 267, histidine 270, aspartate 295, aspartate 306, aspartate 308, and aspartate 338 together coordinate Mg(2+).

It belongs to the xylose isomerase family. In terms of assembly, homotetramer. The cofactor is Mg(2+).

Its subcellular location is the cytoplasm. The enzyme catalyses alpha-D-xylose = alpha-D-xylulofuranose. This Brucella suis biovar 1 (strain 1330) protein is Xylose isomerase.